Reading from the N-terminus, the 766-residue chain is MQIRYFLALSLLPNIVLADEPTTTEAPSLQCVVAPPVSRSFEDREALTGISDDQIVIISDHSSVAYNNQAEFSGDVSFSQGLRHIAADNAVLDQKEQRLNADGNLIFKDELFTVTADTLEAQMSTNNATLKGAQYWLHGQQVHGDAEKLQITSDNNLLLTKTNFTTCPPGDESWLLEADMIKIDSKEEWGEIWNAKLRIANIPVLYIPYMTVPVSDKRKTGFLFPSFSTSTTNGVEVSTPYYWNIAPEFDLTFTPDFMSSRGLYTKTEFRYLAGEQQNGQFNVEYLGSDSKLTSNADRYLYHWSHQGAVNKNWRVRSDYTDVSDNNYFNDLNSDVNQSTDNQLSRIGEASYFERDWDFNMRVQDIKVLGEDEKPYQVMPQLNFNYRSADIFNTIDFKFNSELTNFRHQDNEYNTATRLHLVPSLIWPIQGPAGSFTSEVKLLQTQYWQQNIDEDSTLNDSISRTIPQARLHGQVNFERATQLFDEQYRQTLEPQIQYLYVGYEDQSNIGIYDTAQLQEDYYGLFRDRQYSGLDRVADANQFTLGFTTRLFDQTNREKLKFSVGQIMYLEDSKVSIDDTYEETAQSTSVLAAELDAQLYNDWFVSGSVQHDTETGENKKNEVTLDYRPSSDRLLQLSYRYVPDLLNTNTNDQVDISQAGVRTSWPISDNLYFVGNYYYDLNESRNIETYTGVQYESCCWALRLSYHYRIKTNYDDDLSESIDGREEFESGVYLNFVIKGLGGSGPLGVDDMLNEGLFNYRKPLYLRN.

The N-terminal stretch at 1 to 18 is a signal peptide; that stretch reads MQIRYFLALSLLPNIVLA.

Belongs to the LptD family. In terms of assembly, component of the lipopolysaccharide transport and assembly complex. Interacts with LptE and LptA.

It is found in the cell outer membrane. Its function is as follows. Together with LptE, is involved in the assembly of lipopolysaccharide (LPS) at the surface of the outer membrane. The chain is LPS-assembly protein LptD from Shewanella frigidimarina (strain NCIMB 400).